Reading from the N-terminus, the 217-residue chain is Pyridoxine/pyridoxamine 5'-phosphate oxidase (217 aa).

Substrate contacts are provided by residues 14-17 (RKSY) and K72. FMN contacts are provided by residues 67–72 (RVVLIK), 82–83 (YT), R88, and K89. Y129, R133, and S137 together coordinate substrate. FMN-binding positions include 146–147 (QS) and W190. 196-198 (RLH) is a binding site for substrate. R200 is an FMN binding site.

The protein belongs to the pyridoxamine 5'-phosphate oxidase family. Homodimer. Requires FMN as cofactor.

The enzyme catalyses pyridoxamine 5'-phosphate + O2 + H2O = pyridoxal 5'-phosphate + H2O2 + NH4(+). It carries out the reaction pyridoxine 5'-phosphate + O2 = pyridoxal 5'-phosphate + H2O2. It participates in cofactor metabolism; pyridoxal 5'-phosphate salvage; pyridoxal 5'-phosphate from pyridoxamine 5'-phosphate: step 1/1. The protein operates within cofactor metabolism; pyridoxal 5'-phosphate salvage; pyridoxal 5'-phosphate from pyridoxine 5'-phosphate: step 1/1. Its function is as follows. Catalyzes the oxidation of either pyridoxine 5'-phosphate (PNP) or pyridoxamine 5'-phosphate (PMP) into pyridoxal 5'-phosphate (PLP). The sequence is that of Pyridoxine/pyridoxamine 5'-phosphate oxidase from Acidovorax sp. (strain JS42).